The primary structure comprises 294 residues: Epimerase family protein SDR39U1 (294 aa).

Residues 31–32 (SR), 58–59 (LA), Glu-77, Arg-82, and Val-160 contribute to the NADP(+) site.

The protein belongs to the NAD(P)-dependent epimerase/dehydratase family. SDR39U1 subfamily.

Its function is as follows. Putative NADP-dependent oxidoreductase. The protein is Epimerase family protein SDR39U1 (SDR39U1) of Bos taurus (Bovine).